The following is a 361-amino-acid chain: Chorismate synthase (361 aa).

Arg47 lines the NADP(+) pocket. FMN-binding positions include 124-126 (RAS), Gly286, 301-305 (KPTAT), and Arg327.

This sequence belongs to the chorismate synthase family. In terms of assembly, homotetramer. It depends on FMNH2 as a cofactor.

It catalyses the reaction 5-O-(1-carboxyvinyl)-3-phosphoshikimate = chorismate + phosphate. It functions in the pathway metabolic intermediate biosynthesis; chorismate biosynthesis; chorismate from D-erythrose 4-phosphate and phosphoenolpyruvate: step 7/7. Its function is as follows. Catalyzes the anti-1,4-elimination of the C-3 phosphate and the C-6 proR hydrogen from 5-enolpyruvylshikimate-3-phosphate (EPSP) to yield chorismate, which is the branch point compound that serves as the starting substrate for the three terminal pathways of aromatic amino acid biosynthesis. This reaction introduces a second double bond into the aromatic ring system. The protein is Chorismate synthase of Akkermansia muciniphila (strain ATCC BAA-835 / DSM 22959 / JCM 33894 / BCRC 81048 / CCUG 64013 / CIP 107961 / Muc).